Here is a 96-residue protein sequence, read N- to C-terminus: Glutamyl-tRNA(Gln) amidotransferase subunit C (96 aa).

Belongs to the GatC family. In terms of assembly, heterotrimer of A, B and C subunits.

The catalysed reaction is L-glutamyl-tRNA(Gln) + L-glutamine + ATP + H2O = L-glutaminyl-tRNA(Gln) + L-glutamate + ADP + phosphate + H(+). The enzyme catalyses L-aspartyl-tRNA(Asn) + L-glutamine + ATP + H2O = L-asparaginyl-tRNA(Asn) + L-glutamate + ADP + phosphate + 2 H(+). Allows the formation of correctly charged Asn-tRNA(Asn) or Gln-tRNA(Gln) through the transamidation of misacylated Asp-tRNA(Asn) or Glu-tRNA(Gln) in organisms which lack either or both of asparaginyl-tRNA or glutaminyl-tRNA synthetases. The reaction takes place in the presence of glutamine and ATP through an activated phospho-Asp-tRNA(Asn) or phospho-Glu-tRNA(Gln). The sequence is that of Glutamyl-tRNA(Gln) amidotransferase subunit C from Deinococcus radiodurans (strain ATCC 13939 / DSM 20539 / JCM 16871 / CCUG 27074 / LMG 4051 / NBRC 15346 / NCIMB 9279 / VKM B-1422 / R1).